A 128-amino-acid chain; its full sequence is uncharacterized protein (128 aa).

The signal sequence occupies residues 1–24 (MKMTKLTTLLLTATLGLASGAALA). Low complexity-rich tracts occupy residues 24 to 44 (AAES…NAGQ) and 52 to 70 (NVAP…GNTN). Residues 24–128 (AAESNAQSSN…VNTKTDGTTQ (105 aa)) form a disordered region. A compositionally biased stretch (polar residues) spans 71–82 (STMQHPDGSTMN). Basic and acidic residues predominate over residues 85–110 (GMTKDEEHKNTMCKDGRCPDINKKVE). The segment covering 113-128 (NGVNNDVNTKTDGTTQ) has biased composition (polar residues).

This is an uncharacterized protein from Salmonella typhi.